The chain runs to 307 residues: Probable 2-methylisocitrate lyase 2 (307 aa).

53 to 55 (SGA) serves as a coordination point for substrate. The Mg(2+) site is built by D92 and D94. Substrate-binding positions include 129–130 (CG), R164, E194, 216–218 (NMT), R247, and R276.

It belongs to the isocitrate lyase/PEP mutase superfamily. Methylisocitrate lyase family. Homotetramer; dimer of dimers. Requires Mg(2+) as cofactor.

The catalysed reaction is (2S,3R)-3-hydroxybutane-1,2,3-tricarboxylate = pyruvate + succinate. It functions in the pathway organic acid metabolism; propanoate degradation. In terms of biological role, involved in the catabolism of short chain fatty acids (SCFA) via the 2-methylcitrate cycle I (propionate degradation route). Catalyzes the thermodynamically favored C-C bond cleavage of (2R,3S)-2-methylisocitrate to yield pyruvate and succinate via an alpha-carboxy-carbanion intermediate. The chain is Probable 2-methylisocitrate lyase 2 from Corynebacterium glutamicum (strain ATCC 13032 / DSM 20300 / JCM 1318 / BCRC 11384 / CCUG 27702 / LMG 3730 / NBRC 12168 / NCIMB 10025 / NRRL B-2784 / 534).